We begin with the raw amino-acid sequence, 591 residues long: General transcription and DNA repair factor IIH subunit TFB1-1 (591 aa).

BSD domains follow at residues 112-166 (STSS…GKDS) and 191-243 (RTNR…YLYS).

This sequence belongs to the TFB1 family. As to quaternary structure, component of the 7-subunit TFIIH core complex composed of XPB, XPD, TFB1/GTF2H1, GTF2H2/P44, TFB4/GTF2H3, TFB2/GTF2H4 and TFB5/GTF2H5, which is active in NER. The core complex associates with the 3-subunit CDK-activating kinase (CAK) module composed of CYCH1/cyclin H1, CDKD and MAT1/At4g30820 to form the 10-subunit holoenzyme (holo-TFIIH) active in transcription.

It localises to the nucleus. Its function is as follows. Component of the general transcription and DNA repair factor IIH (TFIIH) core complex, which is involved in general and transcription-coupled nucleotide excision repair (NER) of damaged DNA and, when complexed to CAK, in RNA transcription by RNA polymerase II. In NER, TFIIH acts by opening DNA around the lesion to allow the excision of the damaged oligonucleotide and its replacement by a new DNA fragment. In transcription, TFIIH has an essential role in transcription initiation. When the pre-initiation complex (PIC) has been established, TFIIH is required for promoter opening and promoter escape. Phosphorylation of the C-terminal tail (CTD) of the largest subunit of RNA polymerase II by the kinase module CAK controls the initiation of transcription. The polypeptide is General transcription and DNA repair factor IIH subunit TFB1-1 (Arabidopsis thaliana (Mouse-ear cress)).